A 363-amino-acid chain; its full sequence is Putative serine/threonine-protein kinase gskl-1 (363 aa).

In terms of domain architecture, Protein kinase spans 20-304; it reads FGAHKLCGSG…AIDVLKMPLF (285 aa). ATP-binding positions include 26 to 34 and Lys50; that span reads CGSGRFSNV. Asp146 functions as the Proton acceptor in the catalytic mechanism. A disordered region spans residues 311 to 363; that stretch reads PPKKRSNGVEMPNLASYTEMHHKREPETEVVADIQTTEKAEKESDSTNEELED. The span at 346–355 shows a compositional bias: basic and acidic residues; sequence TTEKAEKESD.

The protein belongs to the protein kinase superfamily. Ser/Thr protein kinase family. As to expression, expressed during multiple stages of spermatogenesis, in males and hermaphrodites (at protein level).

It localises to the cytoplasm. The protein localises to the cell projection. It is found in the pseudopodium. It carries out the reaction L-seryl-[protein] + ATP = O-phospho-L-seryl-[protein] + ADP + H(+). It catalyses the reaction L-threonyl-[protein] + ATP = O-phospho-L-threonyl-[protein] + ADP + H(+). May be an autophosphorylating tyrosine kinase, a bifunctional (serine/tyrosine-specific) protein kinase, or a serine kinase that is a substrate for an associated tyrosine kinase. Acting in concert with putative serine/threonine-protein kinase gskl-2, required for sister chromatid segregation and spermatid budding during male meiosis. Plays a role in regulating female meiosis II, together with gskl-2. Involved in sperm pseudopod formation and function, together with gskl-2. This chain is Putative serine/threonine-protein kinase gskl-1, found in Caenorhabditis elegans.